Reading from the N-terminus, the 160-residue chain is MMNRVVLVGRLTKDPELRYTPAGVAVATFTLAVNRPFKNGQGEQEADFIQCVVWRKPAENVANFLKKGSLAGVDGRVQTRNYEGNDGKRVYVTEIVAESVQFLESKQNGAGGSTSNNNQSETNYSNDNKTSSYRADRSQNGDSFANEGAPVDINPDDLPF.

The region spanning 2–104 is the SSB domain; sequence MNRVVLVGRL…IVAESVQFLE (103 aa). Polar residues predominate over residues 106–133; it reads KQNGAGGSTSNNNQSETNYSNDNKTSSY. The interval 106–160 is disordered; sequence KQNGAGGSTSNNNQSETNYSNDNKTSSYRADRSQNGDSFANEGAPVDINPDDLPF.

As to quaternary structure, homotetramer.

This chain is Single-stranded DNA-binding protein 3 (ssb3), found in Listeria innocua serovar 6a (strain ATCC BAA-680 / CLIP 11262).